A 1089-amino-acid chain; its full sequence is Protein phosphatase 1 regulatory subunit 3A (1089 aa).

Positions 32 to 57 are disordered; it reads KATFKPGFSPQPSRRGSGSSEDMYLD. Over residues 37–51 the composition is skewed to low complexity; sequence PGFSPQPSRRGSGSS. 2 positions are modified to phosphoserine; by GSK3: S40 and S44. Residues S48 and S51 each carry the phosphoserine modification. At T58 the chain carries Phosphothreonine. The PP1-binding motif signature appears at 64–67; sequence RRVS. S67 carries the post-translational modification Phosphoserine; by PKA. In terms of domain architecture, CBM21 spans 123–231; the sequence is EQLQVQKAVL…NNNGTNYILV (109 aa). 3 disordered regions span residues 385 to 420, 479 to 501, and 566 to 649; these read FYHSRSSSPGNEYGHPHSEEIISDMGEKGPSLGDTS, HGDSTKLEESNASSRDDYAKVDN, and PCPS…SDIA. The span at 581–600 shows a compositional bias: polar residues; that stretch reads SGSNLEPGTSDLSSPRNFSP. A compositionally biased stretch (basic and acidic residues) spans 602 to 614; the sequence is TDDHLFQADRENS. Residues 615 to 625 show a composition bias toward polar residues; that stretch reads DSSNPENQNMN. S821 is modified (phosphoserine). Residues 949–968 form a disordered region; that stretch reads IMKSGSGGERGGGPILQQKE. Gly residues predominate over residues 953–962; sequence GSGGERGGGP. Residues 1047 to 1067 traverse the membrane as a helical segment; the sequence is LLFLIFLATVYYYDLMIGLAF.

In terms of assembly, interacts with PPP1CC catalytic subunit of PP1, and associates with glycogen. In terms of processing, phosphorylation at Ser-48 by ISPK stimulates the dephosphorylation of glycogen synthase and phosphorylase kinase. In terms of tissue distribution, skeletal muscle and heart.

The protein resides in the membrane. In terms of biological role, seems to act as a glycogen-targeting subunit for PP1. PP1 is essential for cell division, and participates in the regulation of glycogen metabolism, muscle contractility and protein synthesis. Plays an important role in glycogen synthesis but is not essential for insulin activation of glycogen synthase. In Mus musculus (Mouse), this protein is Protein phosphatase 1 regulatory subunit 3A (Ppp1r3a).